Consider the following 685-residue polypeptide: Delta-like protein 4 (685 aa).

The N-terminal stretch at 1 to 26 (MAAASRSASGWALLLLVALWQQRAAG) is a signal peptide. Residues 27 to 529 (SGVFQLQLQE…PVGLPPSFPW (503 aa)) lie on the Extracellular side of the membrane. 2 disulfide bridges follow: C50-C54 and C61-C74. 2 N-linked (GlcNAc...) asparagine glycosylation sites follow: N108 and N183. The DSL domain occupies 173–217 (VICSDNYYGDNCSRLCKKRNDHFGHYVCQPDGNLSCLPGWTGEYC). The cysteines at positions 175 and 184 are disulfide-linked. Interaction with Notch1 regions lie at residues 185-187 (SRL) and 191-195 (RNDHF). A disulfide bridge connects residues C188 and C200. N-linked (GlcNAc...) asparagine glycosylation is present at N205. Cystine bridges form between C208/C217, C222/C233, C226/C239, C241/C250, C253/C264, C259/C270, C272/C281, C288/C300, C294/C310, C312/C321, C328/C339, C333/C348, C350/C359, C366/C377, C371/C388, C390/C399, C406/C417, C411/C426, C428/C437, C444/C455, C449/C464, C466/C475, C484/C495, C489/C506, and C508/C517. EGF-like domains are found at residues 218–251 (QQPI…RLCN), 252–282 (ECIP…LFCD), 284–322 (DLNY…VDCE), 324–360 (ELSE…LHCE), 362–400 (STLS…SNCE), 402–438 (KVDR…TYCE), 440–476 (HVSD…RRCE), and 480–518 (SIDA…SRCE). Residue N393 is glycosylated (N-linked (GlcNAc...) asparagine). A helical transmembrane segment spans residues 530–550 (VAVSLGVGLAVLLVLLGMVAV). The Cytoplasmic portion of the chain corresponds to 551 to 685 (AVRQLRLRRP…RNECVIATEV (135 aa)).

As to quaternary structure, interacts with NOTCH4. Interacts (via N-terminal DSL and MNNL domains) with NOTCH1 (via EGF-like domains). As to expression, expressed in vascular endothelium.

Its subcellular location is the cell membrane. In terms of biological role, involved in the Notch signaling pathway as Notch ligand. Activates NOTCH1 and NOTCH4. Involved in angiogenesis; negatively regulates endothelial cell proliferation and migration and angiogenic sprouting. Essential for retinal progenitor proliferation. Required for suppressing rod fates in late retinal progenitors as well as for proper generation of other retinal cell types. During spinal cord neurogenesis, inhibits V2a interneuron fate. The protein is Delta-like protein 4 (DLL4) of Homo sapiens (Human).